The sequence spans 278 residues: Shikimate dehydrogenase (NADP(+)) (278 aa).

Shikimate contacts are provided by residues 15-17 (SMS) and Thr-62. The active-site Proton acceptor is Lys-66. Glu-78 contributes to the NADP(+) binding site. Shikimate is bound by residues Asn-87 and Asp-102. Residues 127-131 (GAGGA), 151-156 (NRTPEK), and Ile-217 each bind NADP(+). Residue Tyr-219 coordinates shikimate. Residue Gly-240 participates in NADP(+) binding.

The protein belongs to the shikimate dehydrogenase family. In terms of assembly, homodimer.

It catalyses the reaction shikimate + NADP(+) = 3-dehydroshikimate + NADPH + H(+). Its pathway is metabolic intermediate biosynthesis; chorismate biosynthesis; chorismate from D-erythrose 4-phosphate and phosphoenolpyruvate: step 4/7. Functionally, involved in the biosynthesis of the chorismate, which leads to the biosynthesis of aromatic amino acids. Catalyzes the reversible NADPH linked reduction of 3-dehydroshikimate (DHSA) to yield shikimate (SA). This chain is Shikimate dehydrogenase (NADP(+)), found in Bacillus licheniformis (strain ATCC 14580 / DSM 13 / JCM 2505 / CCUG 7422 / NBRC 12200 / NCIMB 9375 / NCTC 10341 / NRRL NRS-1264 / Gibson 46).